The sequence spans 64 residues: Thrombin-like enzyme collinein-4 (64 aa).

2 cysteine pairs are disulfide-bonded: cysteine 5-cysteine 23 and cysteine 34-cysteine 51.

As to quaternary structure, monomer. In terms of tissue distribution, expressed by the vanom gland.

The protein localises to the secreted. Functionally, thrombin-like snake venom serine protease. The sequence is that of Thrombin-like enzyme collinein-4 from Crotalus durissus collilineatus (Brazilian rattlesnake).